The primary structure comprises 147 residues: Bis(5'-nucleosyl)-tetraphosphatase [asymmetrical] (147 aa).

Ala-2 is modified (N-acetylalanine). Residues 2–139 (ALRACGLIIF…EMKATLQEGH (138 aa)) enclose the Nudix hydrolase domain. Residues 43–64 (GHVDPGENDLETALRETREETG) carry the Nudix box motif.

It belongs to the Nudix hydrolase family. It depends on a divalent metal cation as a cofactor.

The catalysed reaction is P(1),P(4)-bis(5'-guanosyl) tetraphosphate + H2O = GMP + GTP + 2 H(+). It catalyses the reaction a 5'-end CoA-ribonucleoside in mRNA + H2O = a 5'-end phospho-adenosine-phospho-ribonucleoside in mRNA + (R)-4'-phosphopantetheine + 2 H(+). The enzyme catalyses a 5'-end FAD-phospho-ribonucleoside in mRNA + H2O = a 5'-end phospho-adenosine-phospho-ribonucleoside in mRNA + FMN + 2 H(+). Functionally, catalyzes the asymmetric hydrolysis of diadenosine 5',5'''-P1,P4-tetraphosphate (Ap4A) to yield AMP and ATP. Exhibits decapping activity towards FAD-capped RNAs and dpCoA-capped RNAs in vitro. This is Bis(5'-nucleosyl)-tetraphosphatase [asymmetrical] (Nudt2) from Mus musculus (Mouse).